The chain runs to 103 residues: Pyrimidine/purine nucleoside phosphorylase (103 aa).

It belongs to the nucleoside phosphorylase PpnP family.

It catalyses the reaction a purine D-ribonucleoside + phosphate = a purine nucleobase + alpha-D-ribose 1-phosphate. The enzyme catalyses adenosine + phosphate = alpha-D-ribose 1-phosphate + adenine. It carries out the reaction cytidine + phosphate = cytosine + alpha-D-ribose 1-phosphate. The catalysed reaction is guanosine + phosphate = alpha-D-ribose 1-phosphate + guanine. It catalyses the reaction inosine + phosphate = alpha-D-ribose 1-phosphate + hypoxanthine. The enzyme catalyses thymidine + phosphate = 2-deoxy-alpha-D-ribose 1-phosphate + thymine. It carries out the reaction uridine + phosphate = alpha-D-ribose 1-phosphate + uracil. The catalysed reaction is xanthosine + phosphate = alpha-D-ribose 1-phosphate + xanthine. Its function is as follows. Catalyzes the phosphorolysis of diverse nucleosides, yielding D-ribose 1-phosphate and the respective free bases. Can use uridine, adenosine, guanosine, cytidine, thymidine, inosine and xanthosine as substrates. Also catalyzes the reverse reactions. In Shewanella frigidimarina (strain NCIMB 400), this protein is Pyrimidine/purine nucleoside phosphorylase.